Here is a 237-residue protein sequence, read N- to C-terminus: Ribonuclease 3 (237 aa).

In terms of domain architecture, RNase III spans 7–135; the sequence is IKEVEAKLKF…ILGAVYLDGG (129 aa). E48 provides a ligand contact to Mg(2+). The active site involves D52. Residues N121 and E124 each coordinate Mg(2+). Residue E124 is part of the active site. The 70-residue stretch at 160–229 folds into the DRBM domain; it reads NPKNRLQQLT…AQEALDANDY (70 aa).

Belongs to the ribonuclease III family. In terms of assembly, homodimer. Mg(2+) is required as a cofactor.

It is found in the cytoplasm. The enzyme catalyses Endonucleolytic cleavage to 5'-phosphomonoester.. Functionally, digests double-stranded RNA. Involved in the processing of primary rRNA transcript to yield the immediate precursors to the large and small rRNAs (23S and 16S). Processes some mRNAs, and tRNAs when they are encoded in the rRNA operon. Processes pre-crRNA and tracrRNA of type II CRISPR loci if present in the organism. The protein is Ribonuclease 3 of Chlamydia felis (strain Fe/C-56) (Chlamydophila felis).